The chain runs to 503 residues: ATP synthase subunit alpha, chloroplastic (503 aa).

170-177 (GDRQTGKT) provides a ligand contact to ATP.

This sequence belongs to the ATPase alpha/beta chains family. As to quaternary structure, F-type ATPases have 2 components, CF(1) - the catalytic core - and CF(0) - the membrane proton channel. CF(1) has five subunits: alpha(3), beta(3), gamma(1), delta(1), epsilon(1). CF(0) has four main subunits: a, b, b' and c.

Its subcellular location is the plastid. It is found in the chloroplast thylakoid membrane. The catalysed reaction is ATP + H2O + 4 H(+)(in) = ADP + phosphate + 5 H(+)(out). In terms of biological role, produces ATP from ADP in the presence of a proton gradient across the membrane. The alpha chain is a regulatory subunit. In Trieres chinensis (Marine centric diatom), this protein is ATP synthase subunit alpha, chloroplastic.